The primary structure comprises 438 residues: Actin-like protein 7A (438 aa).

The interval 36 to 56 (ASLKDGPAKRAVWVRRDHSEP) is required for interaction with TES.

The protein belongs to the actin family. In terms of assembly, interacts (via N-terminus) with TES (via LIM domain 2). Heterodimer with TES; the heterodimer interacts with ENAH to form a heterotrimer. Interacts with ACTL9. Interacts with CYLC1; the interaction may be relevant for proper acrosome attachment to the nuclear envelope.

Its subcellular location is the cytoplasm. It localises to the cytoskeleton. The protein localises to the golgi apparatus. It is found in the nucleus. Essential for normal spermatogenesis and male fertility. Required for normal sperm head morphology, acroplaxome formation, acrosome attachment, and acrosome granule stability. May anchor and stabilize acrosomal adherence to the acroplaxome at least in part by facilitating the presence of F-actin in the subacrosomal space. May play an important role in formation and fusion of Golgi-derived vesicles during acrosome biogenesis. The polypeptide is Actin-like protein 7A (ACTL7A) (Bos taurus (Bovine)).